Here is a 100-residue protein sequence, read N- to C-terminus: NADH-quinone oxidoreductase subunit K (100 aa).

3 helical membrane passes run 4–24 (LSHGLILAAILFVLGLTGMII), 28–48 (LLFMLLGLEIMINASALAFVV), and 60–80 (VMYILAVTLAAAEASIGLALL).

The protein belongs to the complex I subunit 4L family. As to quaternary structure, NDH-1 is composed of 13 different subunits. Subunits NuoA, H, J, K, L, M, N constitute the membrane sector of the complex.

It localises to the cell inner membrane. It carries out the reaction a quinone + NADH + 5 H(+)(in) = a quinol + NAD(+) + 4 H(+)(out). In terms of biological role, NDH-1 shuttles electrons from NADH, via FMN and iron-sulfur (Fe-S) centers, to quinones in the respiratory chain. The immediate electron acceptor for the enzyme in this species is believed to be ubiquinone. Couples the redox reaction to proton translocation (for every two electrons transferred, four hydrogen ions are translocated across the cytoplasmic membrane), and thus conserves the redox energy in a proton gradient. This Sodalis glossinidius (strain morsitans) protein is NADH-quinone oxidoreductase subunit K.